The chain runs to 49 residues: uncharacterized protein (49 aa).

The interval methionine 1–isoleucine 49 is disordered. The segment covering asparagine 9–glutamate 18 has biased composition (basic and acidic residues).

This is an uncharacterized protein from Dictyostelium discoideum (Social amoeba).